The chain runs to 396 residues: 8-amino-7-oxononanoate synthase (396 aa).

Residue Arg21 coordinates substrate. A pyridoxal 5'-phosphate-binding site is contributed by 108-109 (GY). His133 contacts substrate. Positions 179, 207, and 236 each coordinate pyridoxal 5'-phosphate. Lys239 bears the N6-(pyridoxal phosphate)lysine mark. Position 353 (Thr353) interacts with substrate.

This sequence belongs to the class-II pyridoxal-phosphate-dependent aminotransferase family. BioF subfamily. As to quaternary structure, homodimer. The cofactor is pyridoxal 5'-phosphate.

The catalysed reaction is 6-carboxyhexanoyl-[ACP] + L-alanine + H(+) = (8S)-8-amino-7-oxononanoate + holo-[ACP] + CO2. It functions in the pathway cofactor biosynthesis; biotin biosynthesis. Catalyzes the decarboxylative condensation of pimeloyl-[acyl-carrier protein] and L-alanine to produce 8-amino-7-oxononanoate (AON), [acyl-carrier protein], and carbon dioxide. In Hahella chejuensis (strain KCTC 2396), this protein is 8-amino-7-oxononanoate synthase.